Reading from the N-terminus, the 142-residue chain is Hemoglobin subunit alpha (142 aa).

In terms of domain architecture, Globin spans 2 to 142 (VLSPADKSNV…VSTVLTSKYR (141 aa)). Serine 4 carries the phosphoserine modification. Lysine 8 and lysine 12 each carry N6-succinyllysine. At lysine 17 the chain carries N6-acetyllysine; alternate. The residue at position 17 (lysine 17) is an N6-succinyllysine; alternate. The residue at position 25 (tyrosine 25) is a Phosphotyrosine. Phosphoserine is present on serine 36. At lysine 41 the chain carries N6-succinyllysine. Serine 50 carries the post-translational modification Phosphoserine. Histidine 59 is an O2 binding site. Residue histidine 88 coordinates heme b. The residue at position 103 (serine 103) is a Phosphoserine. Threonine 109 is modified (phosphothreonine). Serine 125 and serine 132 each carry phosphoserine. 2 positions are modified to phosphothreonine: threonine 135 and threonine 138. At serine 139 the chain carries Phosphoserine.

The protein belongs to the globin family. Heterotetramer of two alpha chains and two beta chains. As to expression, red blood cells.

Functionally, involved in oxygen transport from the lung to the various peripheral tissues. In terms of biological role, hemopressin acts as an antagonist peptide of the cannabinoid receptor CNR1. Hemopressin-binding efficiently blocks cannabinoid receptor CNR1 and subsequent signaling. The sequence is that of Hemoglobin subunit alpha (HBA) from Macaca fuscata fuscata (Japanese macaque).